We begin with the raw amino-acid sequence, 306 residues long: Acetyl-coenzyme A carboxylase carboxyl transferase subunit beta (306 aa).

A CoA carboxyltransferase N-terminal domain is found at Leu-25–Thr-294. Positions Asn-287–Ser-296 are enriched in low complexity. The segment at Asn-287–Ala-306 is disordered.

It belongs to the AccD/PCCB family. In terms of assembly, acetyl-CoA carboxylase is a heterohexamer composed of biotin carboxyl carrier protein (AccB), biotin carboxylase (AccC) and two subunits each of ACCase subunit alpha (AccA) and ACCase subunit beta (AccD).

It is found in the cytoplasm. It catalyses the reaction N(6)-carboxybiotinyl-L-lysyl-[protein] + acetyl-CoA = N(6)-biotinyl-L-lysyl-[protein] + malonyl-CoA. The protein operates within lipid metabolism; malonyl-CoA biosynthesis; malonyl-CoA from acetyl-CoA: step 1/1. Component of the acetyl coenzyme A carboxylase (ACC) complex. Biotin carboxylase (BC) catalyzes the carboxylation of biotin on its carrier protein (BCCP) and then the CO(2) group is transferred by the transcarboxylase to acetyl-CoA to form malonyl-CoA. The polypeptide is Acetyl-coenzyme A carboxylase carboxyl transferase subunit beta (Bartonella henselae (strain ATCC 49882 / DSM 28221 / CCUG 30454 / Houston 1) (Rochalimaea henselae)).